A 591-amino-acid polypeptide reads, in one-letter code: General transcription and DNA repair factor IIH subunit TFB1-1 (591 aa).

2 consecutive BSD domains span residues 112–166 (STSS…GKDS) and 191–243 (RTNR…YLYS).

Belongs to the TFB1 family. In terms of assembly, component of the 7-subunit TFIIH core complex composed of XPB, XPD, TFB1/GTF2H1, GTF2H2/P44, TFB4/GTF2H3, TFB2/GTF2H4 and TFB5/GTF2H5, which is active in NER. The core complex associates with the 3-subunit CDK-activating kinase (CAK) module composed of CYCH1/cyclin H1, CDKD and MAT1/At4g30820 to form the 10-subunit holoenzyme (holo-TFIIH) active in transcription.

It is found in the nucleus. Component of the general transcription and DNA repair factor IIH (TFIIH) core complex, which is involved in general and transcription-coupled nucleotide excision repair (NER) of damaged DNA and, when complexed to CAK, in RNA transcription by RNA polymerase II. In NER, TFIIH acts by opening DNA around the lesion to allow the excision of the damaged oligonucleotide and its replacement by a new DNA fragment. In transcription, TFIIH has an essential role in transcription initiation. When the pre-initiation complex (PIC) has been established, TFIIH is required for promoter opening and promoter escape. Phosphorylation of the C-terminal tail (CTD) of the largest subunit of RNA polymerase II by the kinase module CAK controls the initiation of transcription. The chain is General transcription and DNA repair factor IIH subunit TFB1-1 from Arabidopsis thaliana (Mouse-ear cress).